Reading from the N-terminus, the 435-residue chain is Chaperone SurA (435 aa).

Positions 1 to 29 are cleaved as a signal peptide; that stretch reads MINKTLHTKHTLLGLLAMAVLMIPVWSQA. PpiC domains lie at 180–281 and 290–390; these read QEDF…KMID and VTQY…RVDD.

The protein resides in the periplasm. The catalysed reaction is [protein]-peptidylproline (omega=180) = [protein]-peptidylproline (omega=0). Chaperone involved in the correct folding and assembly of outer membrane proteins. Recognizes specific patterns of aromatic residues and the orientation of their side chains, which are found more frequently in integral outer membrane proteins. May act in both early periplasmic and late outer membrane-associated steps of protein maturation. The protein is Chaperone SurA of Alcanivorax borkumensis (strain ATCC 700651 / DSM 11573 / NCIMB 13689 / SK2).